Reading from the N-terminus, the 424-residue chain is CAAX prenyl protease 1 homolog (424 aa).

The next 5 membrane-spanning stretches (helical) occupy residues 3–23 (IPFM…ETYL), 67–87 (EFVT…PWFW), 109–129 (LSFL…FSLY), 155–175 (GTFL…FIVQ), and 185–205 (LWAF…VLIA). Residue H284 coordinates Zn(2+). E285 is an active-site residue. Residue H288 coordinates Zn(2+). The next 2 membrane-spanning stretches (helical) occupy residues 295–315 (TYSF…YTLV) and 332–352 (VLIG…LVSF). E362 lines the Zn(2+) pocket. D366 functions as the Proton donor in the catalytic mechanism.

Belongs to the peptidase M48A family. Zn(2+) serves as cofactor. In terms of tissue distribution, expressed in leaves, stems and flowers.

It localises to the endoplasmic reticulum membrane. The catalysed reaction is Hydrolyzes the peptide bond -P2-(S-farnesyl or geranylgeranyl)C-P1'-P2'-P3'-COOH where P1' and P2' are amino acids with aliphatic side chains and P3' is any C-terminal residue.. Functionally, proteolytically removes the C-terminal three residues of farnesylated proteins. The substrate specificity is only partially overlapping with that of FACE2. This Arabidopsis thaliana (Mouse-ear cress) protein is CAAX prenyl protease 1 homolog (FACE1).